The following is a 155-amino-acid chain: UPF0461 protein C5orf24 homolog (155 aa).

Residues 1-10 show a composition bias toward polar residues; sequence MMHPVASSNP. Residues 1–20 form a disordered region; it reads MMHPVASSNPAFCGPGKPSC. Position 37 is a phosphoserine (Ser-37). The disordered stretch occupies residues 40–155; the sequence is SKYSHTVNHK…QQAFRCSSDA (116 aa). A compositionally biased stretch (polar residues) spans 57-70; the sequence is DPLNETHLQTTSGR. Residue Lys-75 forms a Glycyl lysine isopeptide (Lys-Gly) (interchain with G-Cter in SUMO2) linkage. Positions 80–92 are enriched in basic residues; it reads KKKNLNRSGKRGR. Positions 94 to 107 are enriched in polar residues; that stretch reads SGTTKSAGYRTSTG. Ser-121 carries the phosphoserine modification.

It belongs to the UPF0461 family.

This Pongo abelii (Sumatran orangutan) protein is UPF0461 protein C5orf24 homolog.